The primary structure comprises 118 residues: Large ribosomal subunit protein bL19 (118 aa).

Belongs to the bacterial ribosomal protein bL19 family.

In terms of biological role, this protein is located at the 30S-50S ribosomal subunit interface and may play a role in the structure and function of the aminoacyl-tRNA binding site. This Nautilia profundicola (strain ATCC BAA-1463 / DSM 18972 / AmH) protein is Large ribosomal subunit protein bL19.